The chain runs to 145 residues: uncharacterized protein (145 aa).

Positions 37-123 (GKGTNTAKSS…MDREASYFAP (87 aa)) are disordered. The segment covering 38 to 63 (KGTNTAKSSGGNNGTNLNAKRSNTTQ) has biased composition (polar residues).

This is an uncharacterized protein from Caenorhabditis elegans.